A 159-amino-acid chain; its full sequence is Transcription elongation factor GreA (159 aa).

It belongs to the GreA/GreB family.

Its function is as follows. Necessary for efficient RNA polymerase transcription elongation past template-encoded arresting sites. The arresting sites in DNA have the property of trapping a certain fraction of elongating RNA polymerases that pass through, resulting in locked ternary complexes. Cleavage of the nascent transcript by cleavage factors such as GreA or GreB allows the resumption of elongation from the new 3'terminus. GreA releases sequences of 2 to 3 nucleotides. The sequence is that of Transcription elongation factor GreA from Buchnera aphidicola subsp. Cinara cedri (strain Cc).